The sequence spans 162 residues: Phosphopantetheine adenylyltransferase (162 aa).

Substrate is bound at residue Thr10. ATP is bound by residues Thr10 to Phe11 and His18. Substrate is bound by residues Lys42, Leu74, and Arg88. ATP is bound by residues Gly89–Arg91, Glu99, and Asn124–Thr130.

Belongs to the bacterial CoaD family. Homohexamer. The cofactor is Mg(2+).

The protein resides in the cytoplasm. It carries out the reaction (R)-4'-phosphopantetheine + ATP + H(+) = 3'-dephospho-CoA + diphosphate. The protein operates within cofactor biosynthesis; coenzyme A biosynthesis; CoA from (R)-pantothenate: step 4/5. Functionally, reversibly transfers an adenylyl group from ATP to 4'-phosphopantetheine, yielding dephospho-CoA (dPCoA) and pyrophosphate. The protein is Phosphopantetheine adenylyltransferase of Alteromonas mediterranea (strain DSM 17117 / CIP 110805 / LMG 28347 / Deep ecotype).